The sequence spans 560 residues: DNA ligase B (560 aa).

The active-site N6-AMP-lysine intermediate is Lys128.

This sequence belongs to the NAD-dependent DNA ligase family. LigB subfamily.

The enzyme catalyses NAD(+) + (deoxyribonucleotide)n-3'-hydroxyl + 5'-phospho-(deoxyribonucleotide)m = (deoxyribonucleotide)n+m + AMP + beta-nicotinamide D-nucleotide.. Functionally, catalyzes the formation of phosphodiester linkages between 5'-phosphoryl and 3'-hydroxyl groups in double-stranded DNA using NAD as a coenzyme and as the energy source for the reaction. The polypeptide is DNA ligase B (Azotobacter vinelandii (strain DJ / ATCC BAA-1303)).